Here is a 488-residue protein sequence, read N- to C-terminus: Poly(3-hydroxybutyrate) depolymerase (488 aa).

An N-terminal signal peptide occupies residues 1–27 (MVRRLWRRIAGWLAACVAILCAFPLHA). The active-site Charge relay system is the Ser166. The Fibronectin type-III domain occupies 346 to 428 (APTGLAVTAT…AAVSATTKSA (83 aa)).

The protein belongs to the AB hydrolase superfamily. Lipase family.

The protein localises to the secreted. It catalyses the reaction [(3R)-hydroxybutanoate](n) + H2O = [(3R)-hydroxybutanoate](n-2) + (3R)-hydroxybutanoate dimer + H(+). It carries out the reaction [(3R)-hydroxybutanoate](n) + H2O = [(3R)-hydroxybutanoate](n-3) + (3R)-hydroxybutanoate trimer + H(+). The enzyme catalyses [(3R)-hydroxybutanoate](n) + H2O = [(3R)-hydroxybutanoate](n-1) + (R)-3-hydroxybutanoate + H(+). The catalysed reaction is [(3R)-hydroxybutanoate](n) + H2O = [(3R)-hydroxybutanoate](n-5) + (3R)-hydroxybutanoate pentamer + H(+). It catalyses the reaction [(3R)-hydroxybutanoate](n) + H2O = [(3R)-hydroxybutanoate](n-4) + (3R)-hydroxybutanoate tetramer + H(+). Its function is as follows. This protein degrades water-insoluble and water-soluble PHB to monomeric D(-)-3-hydroxybutyrate. This Ralstonia pickettii (Burkholderia pickettii) protein is Poly(3-hydroxybutyrate) depolymerase.